The chain runs to 523 residues: Signal peptide peptidase-like 3 (523 aa).

The N-terminal stretch at 1–35 is a signal peptide; that stretch reads MAFPAPSSSSPRRRGRGLAYLLVSVLLLASRVPGA. The Lumenal portion of the chain corresponds to 36-207; sequence AGADSEFEDG…EKPSFDGAIP (172 aa). The region spanning 110 to 182 is the PA domain; sequence SAPLASSIAV…SQSAGRKILS (73 aa). An N-linked (GlcNAc...) asparagine glycan is attached at N159. Residues 208 to 228 traverse the membrane as a helical segment; it reads FLWLMAVGSVACASVWSFVVV. Residues 229–254 lie on the Cytoplasmic side of the membrane; the sequence is GDEDKNAPTLGGEEAADSEIVELQTK. The chain crosses the membrane as a helical span at residues 255–272; sequence TALVFIVTASLVLLFLFF. Residues 273–275 lie on the Lumenal side of the membrane; sequence FKS. A helical membrane pass occupies residues 276-298; sequence TWSAWLLVVLFCLSGLQGLHYVA. Topologically, residues 299–321 are cytoplasmic; sequence STLIVRTCDRCREAKVALPVLGN. Residues 322 to 342 traverse the membrane as a helical segment; that stretch reads VTVVTLVILPLALIFVVVWAV. Residues 343–347 are Lumenal-facing; that stretch reads HQNSP. The chain crosses the membrane as a helical span at residues 348–368; it reads FAWVGQDLMGICMMILVLQVV. Residues 369–377 lie on the Cytoplasmic side of the membrane; sequence HLPNIKVAT. Residues 378-398 traverse the membrane as a helical segment; that stretch reads ALLVSAFMYDIFWVFISPFIF. The active site involves D387. The Lumenal segment spans residues 399-430; the sequence is KKSVMITVARGSDEGPSLPMVLKMPKEFDTWN. The chain crosses the membrane as a helical span at residues 431-451; the sequence is GYDMIGFGDILFPGLLVAFSF. D439 is an active-site residue. The Cytoplasmic segment spans residues 452-465; the sequence is RYDRANGKDLTDGY. The helical transmembrane segment at 466-486 threads the bilayer; that stretch reads FLCLMIGYAFGLSCTYVGLYL. Residues 487-489 are Lumenal-facing; that stretch reads MKS. The helical transmembrane segment at 490 to 510 threads the bilayer; it reads GQPALLYLVPSTLGTIVTLGA. The PAL motif lies at 492 to 494; sequence PAL. The Cytoplasmic portion of the chain corresponds to 511–523; it reads KRGELSQLWNAKV.

Belongs to the peptidase A22B family. Post-translationally, glycosylated.

It is found in the endosome membrane. Its function is as follows. Intramembrane-cleaving aspartic protease (I-CLiP) that cleaves type II membrane signal peptides in the hydrophobic plane of the membrane. The protein is Signal peptide peptidase-like 3 (SPPL3) of Oryza sativa subsp. japonica (Rice).